We begin with the raw amino-acid sequence, 164 residues long: Protein SprT (164 aa).

Positions 14–156 (QLAESFFKRP…LCRRCRQTLV (143 aa)) constitute a SprT-like domain. Position 69 (His-69) interacts with Zn(2+). The active site involves Glu-70. His-73 is a binding site for Zn(2+).

It belongs to the SprT family. Zn(2+) serves as cofactor.

It is found in the cytoplasm. This Pseudomonas fluorescens (strain ATCC BAA-477 / NRRL B-23932 / Pf-5) protein is Protein SprT.